Reading from the N-terminus, the 146-residue chain is Transcriptional regulator MraZ (146 aa).

SpoVT-AbrB domains follow at residues 4-46 (TVFR…SQTE) and 75-118 (TVKV…PEQR).

The protein belongs to the MraZ family. In terms of assembly, forms oligomers.

Its subcellular location is the cytoplasm. The protein localises to the nucleoid. The protein is Transcriptional regulator MraZ of Mesomycoplasma hyopneumoniae (strain 232) (Mycoplasma hyopneumoniae).